The chain runs to 362 residues: MSKEETLYSVKVDQERVPLFDEDFYKGFRSELSVRFTMAALDPRAKSNDAVTVNVITRLEHPEEDGEESDEELFQEEKFTLCTLKKGSVYQQPIDIIFSPGEEVFFERVGGDIPVYLSGTCIITNIPEEEDSSDLENDFLYGADEFSSDEEEMDDISVTSSEEEEEENGARIEELNSDEEDAEQAEEEILEKPVPKDEVAEKHSKDKLKKEEKEKKTAVDVSDSVNGKKRKTEPAGEGEQTEKKSKSTKTYPKQVLEGNVTVQDKVKGDGPAAKRKKRVSMRYIGRLTNGKVFDKNITGKPFTFNLGLEEVIKGWDVGIVGMQVGGERTIHIPAAMAYGSKRLPGIPANSDLVFDVKLLAVN.

At serine 69 the chain carries Phosphoserine. The disordered stretch occupies residues 144 to 274; the sequence is DEFSSDEEEM…KVKGDGPAAK (131 aa). Acidic residues-rich tracts occupy residues 146 to 167 and 175 to 189; these read FSSDEEEMDDISVTSSEEEEEE and LNSDEEDAEQAEEEI. Residue serine 177 is modified to Phosphoserine. Over residues 190–218 the composition is skewed to basic and acidic residues; it reads LEKPVPKDEVAEKHSKDKLKKEEKEKKTA. A PPIase FKBP-type domain is found at 276–362; the sequence is KKRVSMRYIG…VFDVKLLAVN (87 aa).

This sequence belongs to the FKBP-type PPIase family. FKBP3/4 subfamily.

It carries out the reaction [protein]-peptidylproline (omega=180) = [protein]-peptidylproline (omega=0). Its function is as follows. PPIases accelerate the folding of proteins. It catalyzes the cis-trans isomerization of proline imidic peptide bonds in oligopeptides. This chain is Probable peptidyl-prolyl cis-trans isomerase C27F1.06c, found in Schizosaccharomyces pombe (strain 972 / ATCC 24843) (Fission yeast).